We begin with the raw amino-acid sequence, 900 residues long: Vacuolar membrane protein pep3 (900 aa).

A disordered region spans residues 1–20; that stretch reads MSLAEDWIDPNSSEDSDIQE. TPR repeat units lie at residues 314 to 345, 373 to 406, 408 to 436, and 546 to 579; these read HLAF…SPHE, NNET…NTVL, GYAE…VEEV, and MKDQ…ETLI. A CHCR repeat occupies 602-756; the sequence is DLDVHALIPS…MFSKKSGIKE (155 aa). The RING-type; atypical zinc-finger motif lies at 837-884; the sequence is CWHCNQPLFSEPFVLFPCQHAFHRSCMLEKTYKLASEKNILKECQLCG.

It belongs to the VPS18 family.

It is found in the vacuole membrane. Functionally, required for vacuolar biogenesis. The sequence is that of Vacuolar membrane protein pep3 (pep3) from Schizosaccharomyces pombe (strain 972 / ATCC 24843) (Fission yeast).